We begin with the raw amino-acid sequence, 397 residues long: Elongation factor Tu (397 aa).

One can recognise a tr-type G domain in the interval 10–207; sequence KPHVNVGTIG…TLDTYIPEPV (198 aa). A G1 region spans residues 19–26; the sequence is GHVDHGKT. 19–26 is a GTP binding site; it reads GHVDHGKT. Residue threonine 26 participates in Mg(2+) binding. Residues 60-64 are G2; that stretch reads GITIN. Residues 81-84 are G3; it reads DCPG. GTP is bound by residues 81–85 and 136–139; these read DCPGH and NKAD. The interval 136-139 is G4; that stretch reads NKAD. The segment at 174–176 is G5; it reads SAL.

The protein belongs to the TRAFAC class translation factor GTPase superfamily. Classic translation factor GTPase family. EF-Tu/EF-1A subfamily. As to quaternary structure, monomer.

It is found in the cytoplasm. It catalyses the reaction GTP + H2O = GDP + phosphate + H(+). In terms of biological role, GTP hydrolase that promotes the GTP-dependent binding of aminoacyl-tRNA to the A-site of ribosomes during protein biosynthesis. The chain is Elongation factor Tu from Ectopseudomonas mendocina (strain ymp) (Pseudomonas mendocina).